The sequence spans 428 residues: Acetyltransferase sirH (428 aa).

Asn-8 is a glycosylation site (N-linked (GlcNAc...) asparagine). 6 helical membrane-spanning segments follow: residues 33–53 (LLTPIFMAVAVLTTLPPPGPL), 55–75 (VIVGLTAFTSLWLHVLTHWVS), 78–98 (AFFMDAIFMISITVRWLLMFV), 305–325 (LYVGFLVSGVQHYACALLIPS), 329–349 (GWGMFWQMPAYAAVVTVEDIL), and 366–386 (FLGYIWTAYWMTLIYALPVGF).

The protein belongs to the wax synthase family.

The protein resides in the membrane. The protein operates within polyketide biosynthesis. Its function is as follows. Acetyltransferase; part of the gene cluster that mediates the biosynthesis of asperlin, a polyketide showing anti-inflammatory, antitumor and antibiotic activities. The first step of the asperlin biosynthesis is the production of the intermediate 2,4,6-octatrienoic acid by the highly redusing polyketide synthase alnA with cleavage of the PKS product by the esterase alnB. 2,4,6-octatrienoic acid is further converted to asperlin via several steps involving the remaining enzymes from the cluster. The protein is Acetyltransferase sirH of Emericella nidulans (strain FGSC A4 / ATCC 38163 / CBS 112.46 / NRRL 194 / M139) (Aspergillus nidulans).